The chain runs to 385 residues: Trans-enoyl reductase poxH (385 aa).

Position 64 to 67 (glutamine 64 to serine 67) interacts with NADP(+). Residue proline 156–isoleucine 163 coordinates substrate. Residues serine 199 to valine 202, serine 223 to aspartate 226, tyrosine 241, and leucine 289 to glycine 290 contribute to the NADP(+) site. Histidine 309–leucine 313 provides a ligand contact to substrate. Lysine 372–arginine 373 contributes to the NADP(+) binding site.

The protein belongs to the zinc-containing alcohol dehydrogenase family. Monomer.

It functions in the pathway secondary metabolite biosynthesis. Its function is as follows. Trans-enoyl reductase; part of the gene cluster that mediates the biosynthesis of oxaleimides, cytotoxic compounds containing an unusual disubstituted succinimide moiety. The first step of the pathway is provided by the HR-PKS poxF that serves in a new mode of collaborative biosynthesis with the PKS-NRPS poxE, by providing the olefin containing amino acid substrate via the synthesis of an ACP-bound dec-4-enoate. The cytochrome P450 monooxygenase poxM-catalyzed oxidation at the alpha-position creates the enzyme-bound 2-hydroxydec-4-enoyl-ACP thioester, which may be prone to spontaneous hydrolysis to yield 2-hydroxydec-4-enoic acid due to increased electrophilicity of the carbonyl. 2-hydroxydec-4-enoic acid can then be further oxidized by poxM to yield the alpha-ketoacid 2-oxodec-4-enoicacid, which is reductively aminated by the aminotransferase poxL to yield (S,E)-2-aminodec-4-enoic acid. The Hybrid PKS-NRPS synthetase poxE then performs condensation between the octaketide product of its PKS modules and the amino group of (S,E)-2-aminodec-4-enoic acid which is activated and incorporated by the adenylation domain. The resulting aminoacyl product can be cyclized by the Diels-Alderase PoxQ and reductively released by the reductive (R) domain of poxE to yield an aldehyde intermediate. The released aldehyde is then substrate for a Knoevenagel condensation by the hydrolyase poxO followed by an oxidation at the 5-position of the pyrrolidone ring. The presence of the olefin from the amino acid building block allows for migration of the substituted allyl group to occur. This allylic transposition reaction takes place in a conjugate addition, semipinacol-like fashion to yield a succinimide intermediate. Iterative two-electron oxidations of the C7 methyl of the succinimide intermediate to the carboxylic acid can be catalyzed by one of two remaining cytochrome P450 monooxygenasess poxC or poxD to yield oxaleimide A. Subsequent oxidation yields the maleimide scaffold oxaleimide I. Both oxaleimide A and oxaleimide I can undergo oxidative modifications in the decalin ring to yield the series of products oxaleimides B to H. This Penicillium oxalicum (strain 114-2 / CGMCC 5302) (Penicillium decumbens) protein is Trans-enoyl reductase poxH.